The primary structure comprises 210 residues: ATP-dependent Clp protease proteolytic subunit (210 aa).

Catalysis depends on Ser107, which acts as the Nucleophile. The active site involves His132.

Belongs to the peptidase S14 family. As to quaternary structure, fourteen ClpP subunits assemble into 2 heptameric rings which stack back to back to give a disk-like structure with a central cavity, resembling the structure of eukaryotic proteasomes.

The protein resides in the cytoplasm. The enzyme catalyses Hydrolysis of proteins to small peptides in the presence of ATP and magnesium. alpha-casein is the usual test substrate. In the absence of ATP, only oligopeptides shorter than five residues are hydrolyzed (such as succinyl-Leu-Tyr-|-NHMec, and Leu-Tyr-Leu-|-Tyr-Trp, in which cleavage of the -Tyr-|-Leu- and -Tyr-|-Trp bonds also occurs).. Its function is as follows. Cleaves peptides in various proteins in a process that requires ATP hydrolysis. Has a chymotrypsin-like activity. Plays a major role in the degradation of misfolded proteins. This is ATP-dependent Clp protease proteolytic subunit from Ruegeria sp. (strain TM1040) (Silicibacter sp.).